The primary structure comprises 490 residues: Coagulation factor X (490 aa).

Positions 1 to 20 (MANPLHLVLLGAALAGLLLS) are cleaved as a signal peptide. Positions 21 to 40 (GSSVFISRRAANDVLARTRR) are excised as a propeptide. The 45-residue stretch at 41–85 (ANSFLEELKKGNLERECMEENCSYEEALEVFEDREKTNEFWNKYV) folds into the Gla domain. A 4-carboxyglutamate mark is found at Glu-46, Glu-47, Glu-54, Glu-56, Glu-59, and Glu-60. Cys-57 and Cys-62 are disulfide-bonded. N-linked (GlcNAc...) asparagine glycosylation is present at Asn-61. Glu-65, Glu-66, Glu-69, Glu-72, Glu-75, and Glu-79 each carry 4-carboxyglutamate. One can recognise an EGF-like 1; calcium-binding domain in the interval 86 to 122 (DGDQCESNPCQNQGTCKDGLGMYTCSCVEGYEGQDCE). Disulfide bonds link Cys-90–Cys-101, Cys-95–Cys-110, Cys-112–Cys-121, Cys-129–Cys-140, Cys-136–Cys-149, Cys-151–Cys-164, Cys-172–Cys-340, Cys-239–Cys-244, Cys-259–Cys-275, Cys-388–Cys-402, and Cys-413–Cys-441. At Asp-103 the chain carries (3R)-3-hydroxyaspartate. Positions 125 to 165 (TRKLCSLDNGGCDQFCKEEENSVLCSCASGYTLGDNGKSCI) constitute an EGF-like 2 domain. Positions 183–230 (SPATNSSEGPPEAPGPEQQDDGNLTATENPFNLLDSPEPPPEDDSSSL) are disordered. Positions 184-232 (PATNSSEGPPEAPGPEQQDDGNLTATENPFNLLDSPEPPPEDDSSSLVR) are cleaved as a propeptide — activation peptide. 2 N-linked (GlcNAc...) asparagine glycosylation sites follow: Asn-187 and Asn-205. Positions 203–212 (DGNLTATENP) are enriched in polar residues. In terms of domain architecture, Peptidase S1 spans 233-465 (IVGGQDCRDG…FLKWIEKSMR (233 aa)). Residues His-274 and Asp-320 each act as charge relay system in the active site. Catalysis depends on Ser-417, which acts as the Charge relay system.

The protein belongs to the peptidase S1 family. As to quaternary structure, the two chains are formed from a single-chain precursor by the excision of two Arg residues and are held together by 1 or more disulfide bonds. Forms a heterodimer with SERPINA5. In terms of processing, the vitamin K-dependent, enzymatic carboxylation of some glutamate residues allows the modified protein to bind calcium. Post-translationally, N- and O-glycosylated. Proteolytically cleaved and activated by cathepsin CTSG. The activation peptide is cleaved by factor IXa (in the intrinsic pathway), or by factor VIIa (in the extrinsic pathway). In terms of processing, the iron and 2-oxoglutarate dependent 3-hydroxylation of aspartate and asparagine is (R) stereospecific within EGF domains.

It is found in the secreted. The enzyme catalyses Selective cleavage of Arg-|-Thr and then Arg-|-Ile bonds in prothrombin to form thrombin.. Its activity is regulated as follows. Inhibited by SERPINA5. In terms of biological role, factor Xa is a vitamin K-dependent glycoprotein that converts prothrombin to thrombin in the presence of factor Va, calcium and phospholipid during blood clotting. Factor Xa activates pro-inflammatory signaling pathways in a protease-activated receptor (PAR)-dependent manner. The protein is Coagulation factor X (F10) of Oryctolagus cuniculus (Rabbit).